The primary structure comprises 667 residues: Zeaxanthin epoxidase, chloroplastic (667 aa).

A chloroplast-targeting transit peptide spans 1–59; that stretch reads MGSTPFCYSINPSPSKLDFTRTHVFSPVSKQFYLDLSSFSGKPGGVSGFRSRRALLGVK. Residues 82–110 and 360–373 each bind FAD; these read RVLV…LVFE and GFTW…LLGD. Residues 558 to 612 enclose the FHA domain; it reads CIVGSEPDQDFPGMRIVIPSSQVSKMHARVIYKDGAFFLMDLRSEHGTYVTDNEG.

Requires FAD as cofactor. As to expression, expressed in leaves, stems and flowers, and at lower levels in roots and siliques.

It localises to the plastid. The protein resides in the chloroplast. The catalysed reaction is all-trans-zeaxanthin + 4 reduced [2Fe-2S]-[ferredoxin] + 2 O2 + 4 H(+) = all-trans-violaxanthin + 4 oxidized [2Fe-2S]-[ferredoxin] + 2 H2O. It participates in plant hormone biosynthesis; abscisate biosynthesis. Its function is as follows. Zeaxanthin epoxidase that plays an important role in the xanthophyll cycle and abscisic acid (ABA) biosynthesis. Converts zeaxanthin into antheraxanthin and subsequently violaxanthin. Required for resistance to osmotic and drought stresses, ABA-dependent stomatal closure, seed development and dormancy, modulation of defense gene expression and disease resistance and non-photochemical quencing (NPQ). Through its role in ABA biosynthesis, regulates the expression of stress-responsive genes such as RD29A during osmotic stress and is required for normal plant growth during vegetative development. Is required for late skotomorphogenic growth through its role in the xanthophyll carotenoids neoxanthin, violaxanthin and antheraxanthin biosynthesis. Required for beta-aminobutyric acid (BABA)-induced priming in disease resistance, tolerance to salt and drought stresses and sterility. Participates in NPQ by regulating the level of zeaxanthin in photosynthetic energy conversion. NPQ is a process that maintains the balance between dissipation and utilization of light energy to minimize the generation of oxidizing molecules and the molecular damages they can generate. The protein is Zeaxanthin epoxidase, chloroplastic (ZEP) of Arabidopsis thaliana (Mouse-ear cress).